Consider the following 513-residue polypeptide: ATP synthase subunit alpha (513 aa).

169–176 serves as a coordination point for ATP; that stretch reads GDRKTGKS.

Belongs to the ATPase alpha/beta chains family. In terms of assembly, F-type ATPases have 2 components, CF(1) - the catalytic core - and CF(0) - the membrane proton channel. CF(1) has five subunits: alpha(3), beta(3), gamma(1), delta(1), epsilon(1). CF(0) has three main subunits: a(1), b(2) and c(9-12). The alpha and beta chains form an alternating ring which encloses part of the gamma chain. CF(1) is attached to CF(0) by a central stalk formed by the gamma and epsilon chains, while a peripheral stalk is formed by the delta and b chains.

It localises to the cell membrane. It carries out the reaction ATP + H2O + 4 H(+)(in) = ADP + phosphate + 5 H(+)(out). Produces ATP from ADP in the presence of a proton gradient across the membrane. The alpha chain is a regulatory subunit. This is ATP synthase subunit alpha from Levilactobacillus brevis (strain ATCC 367 / BCRC 12310 / CIP 105137 / JCM 1170 / LMG 11437 / NCIMB 947 / NCTC 947) (Lactobacillus brevis).